A 673-amino-acid polypeptide reads, in one-letter code: Putative potassium transport system protein Kup 1 (673 aa).

The next 13 membrane-spanning stretches (helical) occupy residues 14–34 (GAGF…SPLY), 58–78 (LSLI…WIAL), 101–121 (WLII…ALTP), 147–167 (LPIV…QRFG), 175–195 (FGPV…INLF), 196–216 (GDFS…LLSP), 220–240 (AGIF…ALYS), 252–272 (VSWP…AAWL), 294–314 (LIIF…QALI), 345–365 (LYIP…VVYF), 374–394 (AYGL…TVYL), 403–423 (VFVV…FAAS), and 427–447 (FLHG…VMAI).

It belongs to the HAK/KUP transporter (TC 2.A.72) family.

The protein localises to the cell membrane. The enzyme catalyses K(+)(in) + H(+)(in) = K(+)(out) + H(+)(out). Its function is as follows. Transport of potassium into the cell. Likely operates as a K(+):H(+) symporter. This Lactococcus lactis subsp. cremoris (strain MG1363) protein is Putative potassium transport system protein Kup 1.